A 596-amino-acid polypeptide reads, in one-letter code: Elongation factor 4 (596 aa).

Residues 2–184 enclose the tr-type G domain; the sequence is KQIRNFSIIA…VIVAKIPPPE (183 aa). Residues 14 to 19 and 131 to 134 each bind GTP; these read DHGKST and NKID.

It belongs to the TRAFAC class translation factor GTPase superfamily. Classic translation factor GTPase family. LepA subfamily.

The protein localises to the cell inner membrane. The catalysed reaction is GTP + H2O = GDP + phosphate + H(+). Functionally, required for accurate and efficient protein synthesis under certain stress conditions. May act as a fidelity factor of the translation reaction, by catalyzing a one-codon backward translocation of tRNAs on improperly translocated ribosomes. Back-translocation proceeds from a post-translocation (POST) complex to a pre-translocation (PRE) complex, thus giving elongation factor G a second chance to translocate the tRNAs correctly. Binds to ribosomes in a GTP-dependent manner. The polypeptide is Elongation factor 4 (Shewanella baltica (strain OS155 / ATCC BAA-1091)).